A 122-amino-acid polypeptide reads, in one-letter code: Probable glycine cleavage system H protein (122 aa).

Positions 23–104 constitute a Lipoyl-binding domain; sequence IATVGITDYA…PYGNWLVKMK (82 aa). Lys-64 bears the N6-lipoyllysine mark.

It belongs to the GcvH family. In terms of assembly, the glycine cleavage system is composed of four proteins: P, T, L and H. (R)-lipoate serves as cofactor.

Its function is as follows. The glycine cleavage system catalyzes the degradation of glycine. The H protein shuttles the methylamine group of glycine from the P protein to the T protein. The sequence is that of Probable glycine cleavage system H protein from Thermoplasma volcanium (strain ATCC 51530 / DSM 4299 / JCM 9571 / NBRC 15438 / GSS1).